A 380-amino-acid polypeptide reads, in one-letter code: Queuine tRNA-ribosyltransferase (380 aa).

Aspartate 96 serves as the catalytic Proton acceptor. Substrate contacts are provided by residues 96 to 100, aspartate 150, glutamine 193, and glycine 220; that span reads DSGGF. The segment at 251–257 is RNA binding; sequence GVGAPDS. Catalysis depends on aspartate 270, which acts as the Nucleophile. Residues 275–279 form an RNA binding; important for wobble base 34 recognition region; the sequence is TRIAR. Zn(2+)-binding residues include cysteine 308, cysteine 310, cysteine 313, and histidine 339.

Belongs to the queuine tRNA-ribosyltransferase family. In terms of assembly, homodimer. Within each dimer, one monomer is responsible for RNA recognition and catalysis, while the other monomer binds to the replacement base PreQ1. Zn(2+) is required as a cofactor.

The enzyme catalyses 7-aminomethyl-7-carbaguanine + guanosine(34) in tRNA = 7-aminomethyl-7-carbaguanosine(34) in tRNA + guanine. Its pathway is tRNA modification; tRNA-queuosine biosynthesis. Its function is as follows. Catalyzes the base-exchange of a guanine (G) residue with the queuine precursor 7-aminomethyl-7-deazaguanine (PreQ1) at position 34 (anticodon wobble position) in tRNAs with GU(N) anticodons (tRNA-Asp, -Asn, -His and -Tyr). Catalysis occurs through a double-displacement mechanism. The nucleophile active site attacks the C1' of nucleotide 34 to detach the guanine base from the RNA, forming a covalent enzyme-RNA intermediate. The proton acceptor active site deprotonates the incoming PreQ1, allowing a nucleophilic attack on the C1' of the ribose to form the product. After dissociation, two additional enzymatic reactions on the tRNA convert PreQ1 to queuine (Q), resulting in the hypermodified nucleoside queuosine (7-(((4,5-cis-dihydroxy-2-cyclopenten-1-yl)amino)methyl)-7-deazaguanosine). The sequence is that of Queuine tRNA-ribosyltransferase from Streptococcus pneumoniae (strain Hungary19A-6).